The chain runs to 664 residues: uncharacterized protein (664 aa).

The N-terminal stretch at 1–35 (MGVSVLTFHVSLFLKRILSIAFFLLSLSTLLRIVN) is a signal peptide. 2 N-linked (GlcNAc...) asparagine glycosylation sites follow: asparagine 101 and asparagine 138. Sel1-like repeat units follow at residues 141-178 (AFAN…KQGS) and 179-214 (LDAH…DHLF). N-linked (GlcNAc...) asparagine glycans are attached at residues asparagine 221, asparagine 300, and asparagine 371. Sel1-like repeat units lie at residues 337–372 (AQSC…TKND), 373–409 (SNSY…MNEN), 410–441 (PHAL…TQKS), and 442–477 (VISY…EAIR). 2 N-linked (GlcNAc...) asparagine glycosylation sites follow: asparagine 454 and asparagine 537. 2 Sel1-like repeats span residues 564–599 (IDAI…EQSS) and 601–636 (GMGL…SNQN).

It belongs to the sel-1 family.

This is an uncharacterized protein from Schizosaccharomyces pombe (strain 972 / ATCC 24843) (Fission yeast).